The sequence spans 464 residues: Argininosuccinate lyase (464 aa).

This sequence belongs to the lyase 1 family. Argininosuccinate lyase subfamily.

The protein localises to the cytoplasm. The catalysed reaction is 2-(N(omega)-L-arginino)succinate = fumarate + L-arginine. The protein operates within amino-acid biosynthesis; L-arginine biosynthesis; L-arginine from L-ornithine and carbamoyl phosphate: step 3/3. The polypeptide is Argininosuccinate lyase (Pseudomonas entomophila (strain L48)).